A 292-amino-acid polypeptide reads, in one-letter code: N-acetylneuraminate lyase (292 aa).

Residues S47 and T48 each contribute to the aceneuramate site. Y136 functions as the Proton donor in the catalytic mechanism. K164 acts as the Schiff-base intermediate with substrate in catalysis. The aceneuramate site is built by T166, G188, D190, E191, and S207.

The protein belongs to the DapA family. NanA subfamily. In terms of assembly, homotetramer.

It localises to the cytoplasm. The enzyme catalyses aceneuramate = aldehydo-N-acetyl-D-mannosamine + pyruvate. Its pathway is amino-sugar metabolism; N-acetylneuraminate degradation; D-fructose 6-phosphate from N-acetylneuraminate: step 1/5. Catalyzes the reversible aldol cleavage of N-acetylneuraminic acid (sialic acid; Neu5Ac) to form pyruvate and N-acetylmannosamine (ManNAc) via a Schiff base intermediate. The polypeptide is N-acetylneuraminate lyase (Actinobacillus pleuropneumoniae serotype 3 (strain JL03)).